The primary structure comprises 297 residues: TGF-beta receptor type-2 (297 aa).

The first 23 residues, 1–23, serve as a signal peptide directing secretion; the sequence is MGRGLLGGLWPLHVVLWTRIAST. Residues 24–166 lie on the Extracellular side of the membrane; that stretch reads IPPHVPKSVN…NPDLLLVIFQ (143 aa). Intrachain disulfides connect Cys-51-Cys-84, Cys-54-Cys-71, Cys-61-Cys-67, Cys-77-Cys-101, Cys-121-Cys-136, and Cys-138-Cys-143. 2 N-linked (GlcNAc...) asparagine glycosylation sites follow: Asn-70 and Asn-94. Residues 167-187 traverse the membrane as a helical segment; sequence VTGVSLLPPLGIAIAVIITFY. Residues 188-297 are Cytoplasmic-facing; the sequence is CYRVHRQQKL…KTEKDIFSDL (110 aa). Residues 244-297 form the Protein kinase domain; sequence IELDTLVGKGRFAEVYKAKLRQNTSEQFETVAVKIFPYEEYASWKTEKDIFSDL. ATP-binding positions include 250–258 and Lys-277; that span reads VGKGRFAEV.

It belongs to the protein kinase superfamily. TKL Ser/Thr protein kinase family. TGFB receptor subfamily. As to quaternary structure, homodimer. Heterohexamer; TGFB1, TGFB2 and TGFB3 homodimeric ligands assemble a functional receptor composed of two TGFBR1 and TGFBR2 heterodimers to form a ligand-receptor heterohexamer. The respective affinity of TGFRB1 and TGFRB2 for the ligands may modulate the kinetics of assembly of the receptor and may explain the different biological activities of TGFB1, TGFB2 and TGFB3. Component of a complex composed of TSC22D1 (via N-terminus), TGFBR1 and TGFBR2; the interaction between TSC22D1 and TGFBR1 is inhibited by SMAD7 and promoted by TGFB1. Interacts with DAXX. Interacts with DYNLT4. Interacts with ZFYVE9; ZFYVE9 recruits SMAD2 and SMAD3 to the TGF-beta receptor. Interacts with and is activated by SCUBE3; this interaction does not affect TGFB1-binding to TGFBR2. Interacts with VPS39; this interaction is independent of the receptor kinase activity and of the presence of TGF-beta. Interacts with CLU. Requires Mg(2+) as cofactor. Mn(2+) is required as a cofactor. Post-translationally, phosphorylated on a Ser/Thr residue in the cytoplasmic domain.

It localises to the cell membrane. The protein localises to the membrane raft. The enzyme catalyses L-threonyl-[receptor-protein] + ATP = O-phospho-L-threonyl-[receptor-protein] + ADP + H(+). The catalysed reaction is L-seryl-[receptor-protein] + ATP = O-phospho-L-seryl-[receptor-protein] + ADP + H(+). In terms of biological role, transmembrane serine/threonine kinase forming with the TGF-beta type I serine/threonine kinase receptor, TGFBR1, the non-promiscuous receptor for the TGF-beta cytokines TGFB1, TGFB2 and TGFB3. Transduces the TGFB1, TGFB2 and TGFB3 signal from the cell surface to the cytoplasm and is thus regulating a plethora of physiological and pathological processes including cell cycle arrest in epithelial and hematopoietic cells, control of mesenchymal cell proliferation and differentiation, wound healing, extracellular matrix production, immunosuppression and carcinogenesis. The formation of the receptor complex composed of 2 TGFBR1 and 2 TGFBR2 molecules symmetrically bound to the cytokine dimer results in the phosphorylation and the activation of TGFRB1 by the constitutively active TGFBR2. Activated TGFBR1 phosphorylates SMAD2 which dissociates from the receptor and interacts with SMAD4. The SMAD2-SMAD4 complex is subsequently translocated to the nucleus where it modulates the transcription of the TGF-beta-regulated genes. This constitutes the canonical SMAD-dependent TGF-beta signaling cascade. Also involved in non-canonical, SMAD-independent TGF-beta signaling pathways. The chain is TGF-beta receptor type-2 (TGFBR2) from Sus scrofa (Pig).